Consider the following 84-residue polypeptide: Phosphoribosylformylglycinamidine synthase subunit PurS (84 aa).

This sequence belongs to the PurS family. Homodimer or homotetramer. Part of the FGAM synthase complex composed of 1 PurL, 1 PurQ and 2 PurS subunits.

The protein localises to the cytoplasm. The catalysed reaction is N(2)-formyl-N(1)-(5-phospho-beta-D-ribosyl)glycinamide + L-glutamine + ATP + H2O = 2-formamido-N(1)-(5-O-phospho-beta-D-ribosyl)acetamidine + L-glutamate + ADP + phosphate + H(+). It functions in the pathway purine metabolism; IMP biosynthesis via de novo pathway; 5-amino-1-(5-phospho-D-ribosyl)imidazole from N(2)-formyl-N(1)-(5-phospho-D-ribosyl)glycinamide: step 1/2. Part of the phosphoribosylformylglycinamidine synthase complex involved in the purines biosynthetic pathway. Catalyzes the ATP-dependent conversion of formylglycinamide ribonucleotide (FGAR) and glutamine to yield formylglycinamidine ribonucleotide (FGAM) and glutamate. The FGAM synthase complex is composed of three subunits. PurQ produces an ammonia molecule by converting glutamine to glutamate. PurL transfers the ammonia molecule to FGAR to form FGAM in an ATP-dependent manner. PurS interacts with PurQ and PurL and is thought to assist in the transfer of the ammonia molecule from PurQ to PurL. This Bacillus subtilis (strain 168) protein is Phosphoribosylformylglycinamidine synthase subunit PurS.